A 391-amino-acid polypeptide reads, in one-letter code: MLKMAKVEPVERYCKVIRMIRFCVGFCGNDVADPNFRMWWLTYAVMAAIAFFFACTGYTIYVGVVINGDLTIILQALAMVGSAVQGLTKLLVTANNASHMREVQNTYEDIYREYGSKGDEYAKCLEKRIRITWTLLIGFMLVYIILLGLVITFPIFYLLILHQKVLVMQFLIPFLDHTTDGGHLILTAAHVILITFGGFGNYGGDMYLFLFVTHVPLIKDIFCVKLTEFNELVMKRNDFPKVRAMLCDLLVWHQLYTRMLQTTKKIYSIVLFVQLSTTCVGLLCTISCIFMKAWPAAPLYLLYAAITLYTFCGLGTLVENSNEDFLSVIYTNCLWYELPVKEEKLIIMMLAKAQNEVVLTAADMAPLSMNTALQLTKGIYSFSMMLMNYLG.

The Cytoplasmic portion of the chain corresponds to Met1–Val45. A helical membrane pass occupies residues Met46–Ile66. Over Asn67–Thr71 the chain is Extracellular. A helical membrane pass occupies residues Ile72–Val92. Residues Thr93–Met140 lie on the Cytoplasmic side of the membrane. Residues Leu141–Leu161 traverse the membrane as a helical segment. Residues His162–Lys164 lie on the Extracellular side of the membrane. Residues Val165–Ile185 traverse the membrane as a helical segment. At Leu186–Val191 the chain is on the cytoplasmic side. A helical transmembrane segment spans residues Ile192–Val212. Residues Thr213 to Ser268 lie on the Extracellular side of the membrane. A helical transmembrane segment spans residues Ile269–Ile289. The Cytoplasmic portion of the chain corresponds to Phe290–Ala297. A helical transmembrane segment spans residues Pro298–Val318. Residues Glu319–Gly391 lie on the Extracellular side of the membrane.

The protein belongs to the insect chemoreceptor superfamily. Heteromeric odorant receptor channel (TC 1.A.69) family. Or67d subfamily. As to quaternary structure, interacts with Orco. Complexes exist early in the endomembrane system in olfactory sensory neurons (OSNs), coupling these complexes to the conserved ciliary trafficking pathway. In terms of tissue distribution, expressed in antenna.

The protein resides in the cell membrane. Plays a role in detection and sensitivity to pheromones and signal transduction of the fatty-acid-derived male pheromone 11-cis vaccenyl acetate (cVA). Acts in concert with Snmp and lush to capture cVA molecules on the surface of Or67d expressing olfactory dendrites and facilitate their transfer to the odorant-receptor Orco complex. Necessary to mediate behavioral responses to cVA by regulating both male and female mating behavior. Activation of Or67d neurons by cVA inhibits courtship of other males, whereas in females their activation promotes receptivity to other males. May form a complex with Orco to form odorant-sensing units, providing sensitive and prolonged odorant signaling and calcium permeability. In Drosophila melanogaster (Fruit fly), this protein is Odorant receptor 67d (Or67d).